The sequence spans 420 residues: LanC-like protein 3 (420 aa).

This sequence belongs to the LanC-like protein family.

This is LanC-like protein 3 (LANCL3) from Homo sapiens (Human).